The following is a 519-amino-acid chain: Na(+)/H(+) exchange regulatory cofactor NHE-RF3 (519 aa).

The 82-residue stretch at 9 to 90 (ECKLSKQEGQ…SVTLLVLDGD (82 aa)) folds into the PDZ 1 domain. Phosphoserine occurs at positions 108, 148, 192, 250, 334, and 348. 2 PDZ domains span residues 134–215 (RLCY…VDKE) and 243–323 (IVEM…VDKE). A disordered region spans residues 347-374 (GSVKEAPAPTPTSLEVSSPPDTTEEVDH). The span at 357–367 (PTSLEVSSPPD) shows a compositional bias: polar residues. Positions 378–458 (LCRLAKGENG…NVTLLVCGKK (81 aa)) constitute a PDZ 4 domain. Residue Thr-451 is modified to Phosphothreonine. The disordered stretch occupies residues 479–519 (DTPPDSKEGIVVESNHDSHMAKERAHSTASHSSSNSEDTEM). Over residues 482-504 (PDSKEGIVVESNHDSHMAKERAH) the composition is skewed to basic and acidic residues. Ser-492, Ser-508, Ser-510, Ser-511, Ser-512, and Ser-514 each carry phosphoserine. The segment covering 505–519 (STASHSSSNSEDTEM) has biased composition (low complexity).

The protein belongs to the NHER family. In terms of assembly, interacts with PDZK1IP1 and ABCC2. Interacts (via PDZ domains 1 and 3) with SCARB1 (C-terminal domain). Forms a heterodimeric complex with NHERF1. Interacts with AKAP2, BCR, CFTR, SLC22A12, SLC22A4, SLC22A5, NHERF2 and SLC17A1. Component of a complex, composed of PDZK1, SYNGAP1, KLHL17 and NMDA receptors. Interacts (via PDZ1 domain) directly with KLHL17; the interaction is important for integrity of actin cytoskeleton structures in neurons. Interacts (via the first PDZ domain) with PTGIR (via non-isoprenylated C-terminus). Interacts (via C-terminal PDZ domain) with SLC26A6 (via C-terminal domain). Interacts (via C-terminal PDZ domain) with SLC9A3 (via C-terminal domain). Interacts (via PDZ domains 1 and 3) with SLC5A8 (via PDZ-binding motif); interaction increases nicotinate transport activity of SLC5A8. As to expression, expression is limited to epithelial cells. Expressed in the kidney (brush border of proximal tubule), pancreas, liver, and small intestine. Expressed at a lower level in the adrenal cortex, testis and stomach. Overexpressed in breast, renal and lung carcinomas.

The protein localises to the membrane. Its subcellular location is the cell membrane. Its function is as follows. A scaffold protein that connects plasma membrane proteins and regulatory components, regulating their surface expression in epithelial cells apical domains. May be involved in the coordination of a diverse range of regulatory processes for ion transport and second messenger cascades. In complex with NHERF1, may cluster proteins that are functionally dependent in a mutual fashion and modulate the trafficking and the activity of the associated membrane proteins. May play a role in the cellular mechanisms associated with multidrug resistance through its interaction with ABCC2 and PDZK1IP1. May potentiate the CFTR chloride channel activity. Required for normal cell-surface expression of SCARB1. Plays a role in maintaining normal plasma cholesterol levels via its effects on SCARB1. Plays a role in the normal localization and function of the chloride-anion exchanger SLC26A6 to the plasma membrane in the brush border of the proximal tubule of the kidney. May be involved in the regulation of proximal tubular Na(+)-dependent inorganic phosphate cotransport therefore playing an important role in tubule function. The protein is Na(+)/H(+) exchange regulatory cofactor NHE-RF3 (PDZK1) of Homo sapiens (Human).